We begin with the raw amino-acid sequence, 425 residues long: tRNA(Ile)-lysidine synthase (425 aa).

27–32 serves as a coordination point for ATP; it reads SGGLDS.

It belongs to the tRNA(Ile)-lysidine synthase family.

It localises to the cytoplasm. It catalyses the reaction cytidine(34) in tRNA(Ile2) + L-lysine + ATP = lysidine(34) in tRNA(Ile2) + AMP + diphosphate + H(+). Its function is as follows. Ligates lysine onto the cytidine present at position 34 of the AUA codon-specific tRNA(Ile) that contains the anticodon CAU, in an ATP-dependent manner. Cytidine is converted to lysidine, thus changing the amino acid specificity of the tRNA from methionine to isoleucine. The polypeptide is tRNA(Ile)-lysidine synthase (Streptococcus pneumoniae (strain Taiwan19F-14)).